The chain runs to 94 residues: Co-chaperonin GroES (94 aa).

This sequence belongs to the GroES chaperonin family. In terms of assembly, heptamer of 7 subunits arranged in a ring. Interacts with the chaperonin GroEL.

It is found in the cytoplasm. Together with the chaperonin GroEL, plays an essential role in assisting protein folding. The GroEL-GroES system forms a nano-cage that allows encapsulation of the non-native substrate proteins and provides a physical environment optimized to promote and accelerate protein folding. GroES binds to the apical surface of the GroEL ring, thereby capping the opening of the GroEL channel. This is Co-chaperonin GroES from Clostridium kluyveri (strain NBRC 12016).